Here is a 169-residue protein sequence, read N- to C-terminus: Cell division inhibitor SulA (169 aa).

A ftsZ binding region spans residues 106–112 (ALRTGNY). The tract at residues 162-169 (KIHSNLYH) is lon protease binding.

It belongs to the SulA family. In terms of assembly, interacts with FtsZ. Post-translationally, is rapidly cleaved and degraded by the Lon protease once DNA damage is repaired.

Functionally, component of the SOS system and an inhibitor of cell division. Accumulation of SulA causes rapid cessation of cell division and the appearance of long, non-septate filaments. In the presence of GTP, binds a polymerization-competent form of FtsZ in a 1:1 ratio, thus inhibiting FtsZ polymerization and therefore preventing it from participating in the assembly of the Z ring. This mechanism prevents the premature segregation of damaged DNA to daughter cells during cell division. The protein is Cell division inhibitor SulA of Shigella boydii serotype 4 (strain Sb227).